The chain runs to 603 residues: Proline--tRNA ligase (603 aa).

This sequence belongs to the class-II aminoacyl-tRNA synthetase family. ProS type 1 subfamily. In terms of assembly, homodimer.

The protein localises to the cytoplasm. It carries out the reaction tRNA(Pro) + L-proline + ATP = L-prolyl-tRNA(Pro) + AMP + diphosphate. Its function is as follows. Catalyzes the attachment of proline to tRNA(Pro) in a two-step reaction: proline is first activated by ATP to form Pro-AMP and then transferred to the acceptor end of tRNA(Pro). As ProRS can inadvertently accommodate and process non-cognate amino acids such as alanine and cysteine, to avoid such errors it has two additional distinct editing activities against alanine. One activity is designated as 'pretransfer' editing and involves the tRNA(Pro)-independent hydrolysis of activated Ala-AMP. The other activity is designated 'posttransfer' editing and involves deacylation of mischarged Ala-tRNA(Pro). The misacylated Cys-tRNA(Pro) is not edited by ProRS. This is Proline--tRNA ligase from Arthrobacter sp. (strain FB24).